A 167-amino-acid chain; its full sequence is tRNA-specific adenosine deaminase (167 aa).

The CMP/dCMP-type deaminase domain maps to 6-117 (FSHEYWMRHA…DAKTGAAGSL (112 aa)). Residue His-57 participates in Zn(2+) binding. Residue Glu-59 is the Proton donor of the active site. Zn(2+) contacts are provided by Cys-87 and Cys-90.

Belongs to the cytidine and deoxycytidylate deaminase family. In terms of assembly, homodimer. Zn(2+) is required as a cofactor.

It carries out the reaction adenosine(34) in tRNA + H2O + H(+) = inosine(34) in tRNA + NH4(+). In terms of biological role, catalyzes the deamination of adenosine to inosine at the wobble position 34 of tRNA(Arg2). The polypeptide is tRNA-specific adenosine deaminase (Escherichia coli O157:H7).